We begin with the raw amino-acid sequence, 519 residues long: B3 domain-containing protein Os03g0620400 (519 aa).

A DNA-binding region (TF-B3 1) is located at residues 26–119 (MKCFHLQMSA…RFEVLILDSD (94 aa)). Positions 138 to 218 (ERNAAPVDIS…DPQMPPGRNY (81 aa)) are disordered. The span at 189-209 (SGEEGTDSSTSEDESSYELDD) shows a compositional bias: acidic residues. DNA-binding regions (TF-B3) lie at residues 249–349 (VAIM…LRET) and 416–516 (YVSI…IRRN).

The protein resides in the nucleus. The sequence is that of B3 domain-containing protein Os03g0620400 from Oryza sativa subsp. japonica (Rice).